Consider the following 101-residue polypeptide: Interleukin-8 (101 aa).

Residues 1-22 (MNSKLAVALLATFLLSLTLCEA) form the signal peptide. R27 carries the citrulline modification. 2 disulfides stabilise this stretch: C34-C61 and C36-C77.

The protein belongs to the intercrine alpha (chemokine CxC) family. In terms of assembly, homodimer. Interacts with TNFAIP6 (via Link domain); this interaction interferes with chemokine binding to glycosaminoglycans. Post-translationally, citrullination at Arg-27 prevents proteolysis, and dampens tissue inflammation, it also enhances leukocytosis, possibly through impaired chemokine clearance from the blood circulation.

It is found in the secreted. Chemotactic factor that mediates inflammatory response by attracting neutrophils, basophils, and T-cells to clear pathogens and protect the host from infection. Also plays an important role in neutrophil activation. Released in response to an inflammatory stimulus, exerts its effect by binding to the G-protein-coupled receptors CXCR1 and CXCR2, primarily found in neutrophils, monocytes and endothelial cells. G-protein heterotrimer (alpha, beta, gamma subunits) constitutively binds to CXCR1/CXCR2 receptor and activation by IL8 leads to beta and gamma subunits release from Galpha (GNAI2 in neutrophils) and activation of several downstream signaling pathways including PI3K and MAPK pathways. The protein is Interleukin-8 (CXCL8) of Oryctolagus cuniculus (Rabbit).